A 561-amino-acid chain; its full sequence is Zinc finger protein 37A (561 aa).

In terms of domain architecture, KRAB spans 8–79; that stretch reads VSFRDVTVGF…EEKFPSQSHL (72 aa). The C2H2-type 1; degenerate zinc finger occupies 146–168; sequence FEYNECGKAFPENSLFLVHKRGY. The C2H2-type 2; degenerate zinc-finger motif lies at 243–265; sequence IEYNECGTFFSEKLVLHLQQRTH. 10 consecutive C2H2-type zinc fingers follow at residues 271-293, 299-321, 327-349, 355-377, 383-405, 411-433, 439-461, 467-489, 495-517, and 523-545; these read YECH…QRTH, YECH…QRIH, YGCH…QRTH, YECH…QKTH, YECY…QRIH, YECN…LRTH, YECI…LRRH, FGCN…QRTH, YGCN…HRTH, and YECN…QRIH.

The protein belongs to the krueppel C2H2-type zinc-finger protein family.

The protein localises to the nucleus. Its function is as follows. May be involved in transcriptional regulation. In Homo sapiens (Human), this protein is Zinc finger protein 37A (ZNF37A).